Here is a 701-residue protein sequence, read N- to C-terminus: Polyribonucleotide nucleotidyltransferase (701 aa).

Asp-487 and Asp-493 together coordinate Mg(2+). Residues 553-612 (PRLYTLRINPDKIRDVIGKGGSVIRALTEETGTSIDIAEDGLITIASVSAEGAEEAKRRI) form the KH domain. In terms of domain architecture, S1 motif spans 622–692 (GKIYEGTVVK…ERGRIRLSIK (71 aa)).

Belongs to the polyribonucleotide nucleotidyltransferase family. The cofactor is Mg(2+).

Its subcellular location is the cytoplasm. It catalyses the reaction RNA(n+1) + phosphate = RNA(n) + a ribonucleoside 5'-diphosphate. Functionally, involved in mRNA degradation. Catalyzes the phosphorolysis of single-stranded polyribonucleotides processively in the 3'- to 5'-direction. In Laribacter hongkongensis (strain HLHK9), this protein is Polyribonucleotide nucleotidyltransferase.